Reading from the N-terminus, the 319-residue chain is MVTDGASPRSGVSLIIGRPSSGKSTFLNAVCGYKVSIVSPIPQTTRNTVRGIVNIESDQIVFMDTPGYHRSDRKFNLRLQSLVHSNVKDADVLLYLVDATRQFGEEEAAICALLAPYQKTRVLLAFNKVDVLHNSTSCDEHAFLHRQGSVLRAGSLGRALHAALPHLPADRVFTISALHQVGLDALMRTLRDLLPEAAPLYPQDCYTDQTIAFRVTELIREQAIARCRDELPHALYAGVEDMELRRGKRELWCRAFLAVERESQKAVLVGKKGAVIRAIRLDAIRALRTLLPYHISLDIRVKVDRSWRQRDHTLSSLLY.

Residues 9-196 (RSGVSLIIGR…MRTLRDLLPE (188 aa)) form the Era-type G domain. The segment at 17-24 (GRPSSGKS) is G1. 17 to 24 (GRPSSGKS) serves as a coordination point for GTP. The tract at residues 43–47 (QTTRN) is G2. The interval 64–67 (DTPG) is G3. GTP is bound by residues 64–68 (DTPGY) and 127–130 (NKVD). Residues 127–130 (NKVD) form a G4 region. Positions 175 to 177 (ISA) are G5. The region spanning 227-303 (CRDELPHALY…HISLDIRVKV (77 aa)) is the KH type-2 domain.

This sequence belongs to the TRAFAC class TrmE-Era-EngA-EngB-Septin-like GTPase superfamily. Era GTPase family. As to quaternary structure, monomer.

The protein resides in the cytoplasm. The protein localises to the cell inner membrane. In terms of biological role, an essential GTPase that binds both GDP and GTP, with rapid nucleotide exchange. Plays a role in 16S rRNA processing and 30S ribosomal subunit biogenesis and possibly also in cell cycle regulation and energy metabolism. The polypeptide is GTPase Era (Treponema pallidum (strain Nichols)).